The sequence spans 61 residues: Large ribosomal subunit protein uL30 (61 aa).

This sequence belongs to the universal ribosomal protein uL30 family. In terms of assembly, part of the 50S ribosomal subunit.

The protein is Large ribosomal subunit protein uL30 of Acidithiobacillus ferrooxidans (strain ATCC 23270 / DSM 14882 / CIP 104768 / NCIMB 8455) (Ferrobacillus ferrooxidans (strain ATCC 23270)).